A 199-amino-acid chain; its full sequence is Segregation and condensation protein B (199 aa).

This sequence belongs to the ScpB family. As to quaternary structure, homodimer. Homodimerization may be required to stabilize the binding of ScpA to the Smc head domains. Component of a cohesin-like complex composed of ScpA, ScpB and the Smc homodimer, in which ScpA and ScpB bind to the head domain of Smc. The presence of the three proteins is required for the association of the complex with DNA.

The protein resides in the cytoplasm. Participates in chromosomal partition during cell division. May act via the formation of a condensin-like complex containing Smc and ScpA that pull DNA away from mid-cell into both cell halves. This Leuconostoc mesenteroides subsp. mesenteroides (strain ATCC 8293 / DSM 20343 / BCRC 11652 / CCM 1803 / JCM 6124 / NCDO 523 / NBRC 100496 / NCIMB 8023 / NCTC 12954 / NRRL B-1118 / 37Y) protein is Segregation and condensation protein B.